A 179-amino-acid polypeptide reads, in one-letter code: Large ribosomal subunit protein uL5 (179 aa).

Belongs to the universal ribosomal protein uL5 family. As to quaternary structure, part of the 50S ribosomal subunit; part of the 5S rRNA/L5/L18/L25 subcomplex. Contacts the 5S rRNA and the P site tRNA. Forms a bridge to the 30S subunit in the 70S ribosome.

In terms of biological role, this is one of the proteins that bind and probably mediate the attachment of the 5S RNA into the large ribosomal subunit, where it forms part of the central protuberance. In the 70S ribosome it contacts protein S13 of the 30S subunit (bridge B1b), connecting the 2 subunits; this bridge is implicated in subunit movement. Contacts the P site tRNA; the 5S rRNA and some of its associated proteins might help stabilize positioning of ribosome-bound tRNAs. In Geobacter sp. (strain M21), this protein is Large ribosomal subunit protein uL5.